Consider the following 309-residue polypeptide: Ribosomal RNA small subunit methyltransferase H (309 aa).

S-adenosyl-L-methionine-binding positions include 30-32, Asp-50, Phe-74, Asp-96, and Gln-103; that span reads GGH.

It belongs to the methyltransferase superfamily. RsmH family.

It localises to the cytoplasm. The catalysed reaction is cytidine(1402) in 16S rRNA + S-adenosyl-L-methionine = N(4)-methylcytidine(1402) in 16S rRNA + S-adenosyl-L-homocysteine + H(+). Functionally, specifically methylates the N4 position of cytidine in position 1402 (C1402) of 16S rRNA. In Wigglesworthia glossinidia brevipalpis, this protein is Ribosomal RNA small subunit methyltransferase H.